The sequence spans 332 residues: Putative peptide import ATP-binding protein BMEII0206 (332 aa).

In terms of domain architecture, ABC transporter spans 11–261 (LEVSNLSVDF…PLHPYTEGLL (251 aa)). Residue 47–54 (GESGSGKS) participates in ATP binding.

The protein belongs to the ABC transporter superfamily. In terms of assembly, the complex is composed of two ATP-binding proteins (BMEII0205 and BMEII0206), two transmembrane proteins (BMEII0207/BMEII0208 and BMEII0209) and a solute-binding protein (BMEII0210).

It localises to the cell inner membrane. In terms of biological role, probably part of an ABC transporter complex that could be involved in peptide import. Probably responsible for energy coupling to the transport system. This is Putative peptide import ATP-binding protein BMEII0206 from Brucella melitensis biotype 1 (strain ATCC 23456 / CCUG 17765 / NCTC 10094 / 16M).